We begin with the raw amino-acid sequence, 377 residues long: SH2/SH3 adapter protein NCK1 (377 aa).

At Ala-2 the chain carries N-acetylalanine. Residues 2-61 (AEEVVVVAKFDYVAQQEQELDIKKNERLWLLDDSKSWWRVRNSMNKTGFVPSNYVERKNS) enclose the SH3 1 domain. Phosphoserine is present on residues Ser-85, Ser-89, Ser-91, and Ser-96. Residue Tyr-105 is modified to Phosphotyrosine. The region spanning 106–165 (DLNMPAYVKFNYMAEREDELSLIKGTKVIVMEKCSDGWWRGSYNGQVGWFPSNYVTEEGD) is the SH3 2 domain. Ser-166 is modified (phosphoserine). The region spanning 190 to 252 (QVLHVVQALY…PKNYVTVMQN (63 aa)) is the SH3 3 domain. The SH2 domain maps to 282–376 (WYYGKVTRHQ…GEKLYLVKHL (95 aa)).

Interacts (via SH2 domain and SH3 domain 2) with EGFR. Interacts with PAK1 and SOS1. Interacts (via SH3 domains) with PKN2. Associates with BLNK, PLCG1, VAV1 and NCK1 in a B-cell antigen receptor-dependent fashion. Interacts with SOCS7. This interaction is required for nuclear import. Part of a complex containing PPP1R15B, PP1 and NCK1. Interacts with RALGPS1. Interacts with CAV2 (tyrosine phosphorylated form). Interacts with ADAM15. Interacts with FASLG. Directly interacts with RASA1. Interacts with isoform 4 of MINK1. Interacts with FLT1 (tyrosine phosphorylated). Interacts with KDR (tyrosine phosphorylated). Interacts (via SH2 domain) with EPHB1; activates the JUN cascade to regulate cell adhesion. Interacts with EPHA2. Interacts (via SH2 domain) with PDGFRB (tyrosine phosphorylated). Interacts with the inactive form of EIF2AK2/PKR. Interacts with PTPN1. Interacts with INSR/insulin receptor (in response to insulin stimulation); This interaction may mediate PTPN1 recruitment leading to INSR dephosphorylation. Interacts with IRS1. In terms of processing, phosphorylated on Ser and Tyr residues. Phosphorylated in response to activation of EGFR and FcERI. Phosphorylated by activated PDGFRB.

It is found in the cytoplasm. It localises to the endoplasmic reticulum. The protein localises to the nucleus. Adapter protein which associates with tyrosine-phosphorylated growth factor receptors, such as KDR and PDGFRB, or their cellular substrates. Maintains low levels of EIF2S1 phosphorylation by promoting its dephosphorylation by PP1. Plays a role in the DNA damage response, not in the detection of the damage by ATM/ATR, but for efficient activation of downstream effectors, such as that of CHEK2. Plays a role in ELK1-dependent transcriptional activation in response to activated Ras signaling. Modulates the activation of EIF2AK2/PKR by dsRNA. May play a role in cell adhesion and migration through interaction with ephrin receptors. This Homo sapiens (Human) protein is SH2/SH3 adapter protein NCK1 (NCK1).